A 294-amino-acid chain; its full sequence is Farnesyl diphosphate synthase (294 aa).

3 residues coordinate isopentenyl diphosphate: lysine 45, arginine 48, and histidine 77. Mg(2+) is bound by residues aspartate 84 and aspartate 90. Arginine 95 is a binding site for (2E)-geranyl diphosphate. Residue arginine 96 participates in isopentenyl diphosphate binding. Lysine 181, threonine 182, and glutamine 220 together coordinate (2E)-geranyl diphosphate.

It belongs to the FPP/GGPP synthase family. It depends on Mg(2+) as a cofactor.

It localises to the cytoplasm. It carries out the reaction isopentenyl diphosphate + (2E)-geranyl diphosphate = (2E,6E)-farnesyl diphosphate + diphosphate. This is Farnesyl diphosphate synthase (ispA) from Buchnera aphidicola subsp. Schizaphis graminum (strain Sg).